A 192-amino-acid chain; its full sequence is Erythropoietin (192 aa).

An N-terminal signal peptide occupies residues 1–26 (MGVPDCLALPLLVTFLLLSLGLPVLG). Cys-33 and Cys-187 are disulfide-bonded. Residues Asn-50, Asn-64, and Asn-109 are each glycosylated (N-linked (GlcNAc...) asparagine).

Belongs to the EPO/TPO family.

Its subcellular location is the secreted. In terms of biological role, hormone involved in the regulation of erythrocyte proliferation and differentiation and the maintenance of a physiological level of circulating erythrocyte mass. Binds to EPOR leading to EPOR dimerization and JAK2 activation thereby activating specific downstream effectors, including STAT1 and STAT3. The chain is Erythropoietin (EPO) from Nannospalax galili (Northern Israeli blind subterranean mole rat).